The following is a 48-amino-acid chain: M-oxotoxin-Ot1c (48 aa).

It is found in the secreted. The protein localises to the target cell membrane. Functionally, disrupts cell membranes, particularly those rich in phosphocholine, through formation of pores. Has antimicrobial activity, hemolytic activity and insecticidal activity. The protein is M-oxotoxin-Ot1c of Oxyopes takobius (Lynx spider).